The following is a 632-amino-acid chain: PWWP domain-containing protein 5 (632 aa).

The region spanning 97–158 is the PWWP domain; the sequence is DSDLVWAKLR…ASQIKPFHQN (62 aa). The tract at residues 310–452 is disordered; it reads RKTDYKDNAE…AERKISSPDE (143 aa). Composition is skewed to basic and acidic residues over residues 313 to 326, 339 to 364, 371 to 383, and 425 to 449; these read DYKD…EKTL, STEK…GKSE, QQKE…HSNE, and KSTE…KISS. Positions 352-359 match the Nuclear localization signal motif; sequence KRKVESSE.

The protein belongs to the PDP family. As to quaternary structure, component of the PRC2 (polycomb repressive complex 2) complex which regulates histone methylation on histone H3K27.

Its subcellular location is the nucleus. Functionally, may influence gene expression by regulating the function of the PRC2 complex and modulating H3K27me3 level. This is PWWP domain-containing protein 5 from Arabidopsis thaliana (Mouse-ear cress).